A 54-amino-acid polypeptide reads, in one-letter code: Photosystem II reaction center protein K (54 aa).

Residues 1–17 (MSFENFAIITLKENVFA) constitute a propeptide that is removed on maturation. The helical transmembrane segment at 33 to 53 (LPIIPVLFLLLAFVWQSAVKF) threads the bilayer.

It belongs to the PsbK family. PSII is composed of 1 copy each of membrane proteins PsbA, PsbB, PsbC, PsbD, PsbE, PsbF, PsbH, PsbI, PsbJ, PsbK, PsbL, PsbM, PsbT, PsbY, PsbZ, Psb30/Ycf12, at least 3 peripheral proteins of the oxygen-evolving complex and a large number of cofactors. It forms dimeric complexes.

The protein resides in the plastid. It is found in the chloroplast thylakoid membrane. One of the components of the core complex of photosystem II (PSII). PSII is a light-driven water:plastoquinone oxidoreductase that uses light energy to abstract electrons from H(2)O, generating O(2) and a proton gradient subsequently used for ATP formation. It consists of a core antenna complex that captures photons, and an electron transfer chain that converts photonic excitation into a charge separation. In Euglena deses, this protein is Photosystem II reaction center protein K.